Consider the following 462-residue polypeptide: Runt-related transcription factor 1 (462 aa).

The tract at residues 1–27 is disordered; sequence MRIPVDTSTSRRFTPPSTTLSPGKMSE. Residues 7 to 22 show a composition bias toward low complexity; the sequence is TSTSRRFTPPSTTLSP. The 129-residue stretch at 50-178 folds into the Runt domain; the sequence is NMVEVLSDHP…TVDGPREPRR (129 aa). The tract at residues 80 to 84 is interaction with DNA; the sequence is RCNKT. Chloride-binding residues include Asn112, Glu116, Arg139, and Val170. Interaction with DNA regions lie at residues 135-143 and 168-177; these read RFVGRSGRG and ITVDGPREPR. The segment at 399–462 is disordered; it reads MMSGGERSPP…RLEEAVWRPY (64 aa). Polar residues-rich tracts occupy residues 415 to 433 and 440 to 450; these read TNAS…NQSD and SHSNSPTNMGS. Basic and acidic residues predominate over residues 453–462; that stretch reads RLEEAVWRPY.

As to quaternary structure, heterodimer with cbfb. runx1 binds DNA as a monomer and through the Runt domain. DNA-binding is increased by heterodimerization. In terms of tissue distribution, shows a complex and dynamic expression pattern. In stage 14-24 embryos, expressed in a subset of neuroblasts in the lateral stripe of the neural plate. In late neurula stages, expression begins in the olfactory placodes. Also expressed in structures that play a role in blood formation: at stage 14, expressed on the anterior ventral side of the embryo in the anterior endomesoderm. As the embryo elongates, expression shifts gradually to a V-shaped expression pattern in the presumptive ventral blood island.

It is found in the nucleus. Involved in primitive hematopoiesis in the embryo. This Xenopus laevis (African clawed frog) protein is Runt-related transcription factor 1.